The following is a 57-amino-acid chain: UPF0434 protein Shal_2504 (57 aa).

It belongs to the UPF0434 family.

This chain is UPF0434 protein Shal_2504, found in Shewanella halifaxensis (strain HAW-EB4).